The chain runs to 1087 residues: Ubiquitin-associated protein 2-like (1087 aa).

Position 1 is an N-acetylmethionine (Met-1). Residues 1-33 (MMTSVGTNRARGNWEQPQNQNQTQHKQRPQATA) form a disordered region. Residues 49 to 89 (DFEEKVKQLIDITGKNQDECVIALHDCNGDVNRAINVLLEG) enclose the UBA domain. The segment at 92–234 (DTHSWEMVGK…TGHFEPDDGT (143 aa)) is disordered. A compositionally biased stretch (basic and acidic residues) spans 118–132 (EEGKENRDRDRDYSR). Residues 133–145 (RRGGPPRRGRGAS) show a composition bias toward basic residues. Asymmetric dimethylarginine is present on residues Arg-187 and Arg-190. The segment covering 213 to 226 (NYGNSSGNTWNNTG) has biased composition (low complexity). Phosphoserine occurs at positions 356 and 360. A compositionally biased stretch (low complexity) spans 377–389 (AQHSQSGSTTTSS). The tract at residues 377-420 (AQHSQSGSTTTSSWDMGSTTQSPSLVQYDLKNPSDSAVHSPFTK) is disordered. Positions 390-401 (WDMGSTTQSPSL) are enriched in polar residues. Phosphoserine occurs at positions 410 and 416. At Thr-425 the chain carries Phosphothreonine. Ser-439, Ser-454, Ser-467, Ser-470, Ser-471, and Ser-477 each carry phosphoserine. 3 disordered regions span residues 440-493 (PAVA…KKAS), 530-656 (SDYE…IPPL), and 669-794 (TNQH…LPPG). Low complexity-rich tracts occupy residues 474–485 (QSSSPQPAQQKL) and 534–569 (STPT…SQES). The span at 570 to 656 (GYQSGPIQST…SPSTSSIPPL (87 aa)) shows a compositional bias: polar residues. A phosphoserine mark is found at Ser-604, Ser-605, Ser-608, and Ser-609. A compositionally biased stretch (low complexity) spans 688–784 (TTTTQHSSTL…STRSSVATTS (97 aa)). A phosphoserine mark is found at Ser-852 and Ser-859. The disordered stretch occupies residues 865 to 901 (FGRGDASSPAPATTLAQPQQNQTQTHHTTQQTFLNPA). Positions 873–896 (PAPATTLAQPQQNQTQTHHTTQQT) are enriched in low complexity. 2 positions are modified to omega-N-methylarginine: Ser-962 and Val-969. Residues Val-969 and Thr-976 each carry the N6-acetyllysine modification. Residues 1040–1087 (QQPHSQILHHHLQQDGQTGSGQRSQTSSIPQKPQTNKSAYNSYSWGAN) form a disordered region. Positions 1053–1067 (QDGQTGSGQRSQTSS) are enriched in low complexity. Residues 1068–1087 (IPQKPQTNKSAYNSYSWGAN) are compositionally biased toward polar residues.

In terms of assembly, interacts with BMI1. Part of a complex consisting of UBAP2L, BMI1 and RNF2. Interacts with G3BP1 (via NTF2 domain); promoting stress granule formation. Post-translationally, acetylated. As to expression, ubiquitous.

The protein localises to the nucleus. It is found in the chromosome. Its subcellular location is the cytoplasm. It localises to the stress granule. In terms of biological role, recruits the ubiquitination machinery to RNA polymerase II for polyubiquitination, removal and degradation, when the transcription-coupled nucleotide excision repair (TC-NER) machinery fails to resolve DNA damage. Plays an important role in the activity of long-term repopulating hematopoietic stem cells (LT-HSCs). Is a regulator of stress granule assembly, required for their efficient formation. Required for proper brain development and neocortex lamination. This Homo sapiens (Human) protein is Ubiquitin-associated protein 2-like.